The primary structure comprises 685 residues: Translation initiation factor IF-2 (685 aa).

Residues Ile-60–Pro-79 form a disordered region. The segment covering Lys-64–Pro-79 has biased composition (basic and acidic residues). The tr-type G domain maps to Asn-175–Val-352. A G1 region spans residues Gly-184–Thr-191. Position 184 to 191 (Gly-184 to Thr-191) interacts with GTP. The interval Gly-209–Ser-213 is G2. The tract at residues Asp-230–Gly-233 is G3. GTP is bound by residues Asp-230–His-234 and Asn-284–Asp-287. A G4 region spans residues Asn-284–Asp-287. Positions Ser-321–Arg-323 are G5.

The protein belongs to the TRAFAC class translation factor GTPase superfamily. Classic translation factor GTPase family. IF-2 subfamily.

The protein resides in the cytoplasm. In terms of biological role, one of the essential components for the initiation of protein synthesis. Protects formylmethionyl-tRNA from spontaneous hydrolysis and promotes its binding to the 30S ribosomal subunits. Also involved in the hydrolysis of GTP during the formation of the 70S ribosomal complex. The polypeptide is Translation initiation factor IF-2 (Fervidobacterium nodosum (strain ATCC 35602 / DSM 5306 / Rt17-B1)).